We begin with the raw amino-acid sequence, 370 residues long: Alpha-(1,3)-fucosyltransferase 7 (370 aa).

The Cytoplasmic portion of the chain corresponds to M1–P36. The helical; Signal-anchor for type II membrane protein transmembrane segment at V37–W59 threads the bilayer. Over L60–A370 the chain is Lumenal. N-linked (GlcNAc...) asparagine glycosylation is present at N86. C96 and C104 are disulfide-bonded. N109 is a glycosylation site (N-linked (GlcNAc...) asparagine). A disulfide bond links C239 and C242. N319 is a glycosylation site (N-linked (GlcNAc...) asparagine). C346 and C349 are disulfide-bonded.

This sequence belongs to the glycosyltransferase 10 family. Post-translationally, N-glycosylated. In terms of tissue distribution, expressed in lymph node and kidney.

It localises to the golgi apparatus. The protein localises to the golgi stack membrane. It catalyses the reaction an N-acetyl-alpha-neuraminyl-(2-&gt;3)-beta-D-galactosyl-(1-&gt;4)-N-acetyl-beta-D-glucosaminyl derivative + GDP-beta-L-fucose = an alpha-Neu5Ac-(2-&gt;3)-beta-D-Gal-(1-&gt;4)-[alpha-L-Fuc-(1-&gt;3)]-beta-D-GlcNAc derivative + GDP + H(+). The enzyme catalyses a neolactoside IV(3)-alpha-NeuAc-nLc4Cer + GDP-beta-L-fucose = a neolactoside IV(3)-alpha-NeuNAc,III(3)-alpha-Fuc-nLc4Cer + GDP + H(+). It carries out the reaction a neolactoside VI(3)-alpha-NeuNAc-nLc6Cer + GDP-beta-L-fucose = a neolactoside VI(3)-alpha-NeuAc,V(3)-alphaFuc-nLc6Cer + GDP + H(+). The catalysed reaction is an alpha-Neu5Ac-(2-&gt;3)-beta-D-Gal-(1-&gt;4)-beta-D-GlcNAc-(1-&gt;3)-beta-D-Gal-(1-&gt;4)-[alpha-L-Fuc-(1-&gt;3)]-beta-D-GlcNAc derivative + GDP-beta-L-fucose = an alpha-Neu5Ac-(2-&gt;3)-beta-D-Gal-(1-&gt;4)-[alpha-L-Fuc-(1-&gt;3)]-beta-D-GlcNAc-(1-&gt;3)-beta-D-Gal-(1-&gt;4)-[alpha-L-Fuc-(1-&gt;3)]-beta-D-GlcNAc derivative + GDP + H(+). It catalyses the reaction an alpha-Neu5Ac-(2-&gt;3)-beta-D-Gal-(1-&gt;4)-beta-D-GlcNAc6S derivative + GDP-beta-L-fucose = an alpha-Neu5Ac-(2-&gt;3)-beta-D-Gal-(1-&gt;4)-[alpha-L-Fuc-(1-&gt;3)]-beta-D-GlcNAc6S derivative + GDP + H(+). The enzyme catalyses alpha-Neu5Ac-(2-&gt;3)-beta-D-Gal-(1-&gt;4)-beta-D-GlcNAc-(1-&gt;3)-beta-D-Gal-(1-&gt;4)-D-Glc + GDP-beta-L-fucose = alpha-Neu5Ac-(2-&gt;3)-beta-D-Gal-(1-&gt;4)-[alpha-L-Fuc-(1-&gt;3)]-beta-D-GlcNAc-(1-&gt;3)-beta-D-Gal-(1-&gt;4)-D-Glc + GDP + H(+). It carries out the reaction alpha-Neu5Ac-(2-&gt;3)-beta-D-Gal-(1-&gt;4)-beta-D-GlcNAc-(1-&gt;3)-beta-D-Gal-(1-&gt;4)-[alpha-L-Fuc-(1-&gt;3)]-beta-D-GlcNAc-(1-&gt;3)-beta-D-Gal-(1-&gt;4)-beta-D-GlcNAc + GDP-beta-L-fucose = alpha-Neu5Ac-(2-&gt;3)-beta-D-Gal-(1-&gt;4)-[alpha-L-Fuc-(1-&gt;3)]-beta-D-GlcNAc-(1-&gt;3)-beta-D-Gal-(1-&gt;4)-[alpha-L-Fuc-(1-&gt;3)]-beta-D-GlcNAc-(1-&gt;3)-beta-D-Gal-(1-&gt;4)-beta-D-GlcNAc + GDP + H(+). The catalysed reaction is alpha-Neu5Ac-(2-&gt;3)-beta-D-Gal-(1-&gt;4)-beta-D-GlcNAc-(1-&gt;3)-beta-D-Gal-(1-&gt;4)-beta-D-GlcNAc-(1-&gt;3)-beta-D-Gal-(1-&gt;4)-beta-D-GlcNAc + GDP-beta-L-fucose = alpha-Neu5Ac-(2-&gt;3)-beta-D-Gal-(1-&gt;4)-[alpha-L-Fuc-(1-&gt;3)]-beta-D-GlcNAc-(1-&gt;3)-beta-D-Gal-(1-&gt;4)-beta-D-GlcNAc-(1-&gt;3)-beta-D-Gal-(1-&gt;4)-beta-D-GlcNAc + GDP + H(+). It participates in protein modification; protein glycosylation. With respect to regulation, inhibited by NaCl. Inhibited by GDP in a concentration dependent manner, with an IC(50) value of 93 uM. Also inhibited by GMP and GTP. Inhibited by N-ethylmaleimide. Activated by poly(ethylene glycol) by enhancing the thermal stability of FUT7. Activated by Mn2+, Ca2+, and Mg2+. Both panosialin A and B inhibit activity with IC(50) values of 4.8 and 5.3 ug/ml, respectively. Inhibited by gallic acid (GA) and (-)-epigallocatechin gallate (EGCG) in a time-dependent and irreversible manner with IC(50) values of 60 and 700 nM, respectively. Catalyzes the transfer of L-fucose, from a guanosine diphosphate-beta-L-fucose, to the N-acetyl glucosamine (GlcNAc) of a distal alpha2,3 sialylated lactosamine unit of a glycoprotein or a glycolipid-linked sialopolylactosamines chain through an alpha-1,3 glycosidic linkage and participates in the final fucosylation step in the biosynthesis of the sialyl Lewis X (sLe(x)), a carbohydrate involved in cell and matrix adhesion during leukocyte trafficking and fertilization. In vitro, also synthesizes sialyl-dimeric-Lex structures, from VIM-2 structures and both di-fucosylated and trifucosylated structures from mono-fucosylated precursors. However does not catalyze alpha 1-3 fucosylation when an internal alpha 1-3 fucosylation is present in polylactosamine chain and the fucosylation rate of the internal GlcNAc residues is reduced once fucose has been added to the distal GlcNAc. Also catalyzes the transfer of a fucose from GDP-beta-fucose to the 6-sulfated a(2,3)sialylated substrate to produce 6-sulfo sLex mediating significant L-selectin-dependent cell adhesion. Through sialyl-Lewis(x) biosynthesis, can control SELE- and SELP-mediated cell adhesion with leukocytes and allows leukocytes tethering and rolling along the endothelial tissue thereby enabling the leukocytes to accumulate at a site of inflammation. May enhance embryo implantation through sialyl Lewis X (sLeX)-mediated adhesion of embryo cells to endometrium. May affect insulin signaling by up-regulating the phosphorylation and expression of some signaling molecules involved in the insulin-signaling pathway through SLe(x) which is present on the glycans of the INSRR alpha subunit. The protein is Alpha-(1,3)-fucosyltransferase 7 of Rattus norvegicus (Rat).